The primary structure comprises 347 residues: Heat-inducible transcription repressor HrcA (347 aa).

This sequence belongs to the HrcA family.

Its function is as follows. Negative regulator of class I heat shock genes (grpE-dnaK-dnaJ and groELS operons). Prevents heat-shock induction of these operons. This Desulforamulus reducens (strain ATCC BAA-1160 / DSM 100696 / MI-1) (Desulfotomaculum reducens) protein is Heat-inducible transcription repressor HrcA.